A 449-amino-acid polypeptide reads, in one-letter code: MASLQQSRRLVTEIPGPASQALTHRRAAAVSSGVGVTLPVFVARAGGGIVEDVDGNRLIDLGSGIAVTTIGNSSPRVVDAVRTQVAEFTHTCFMVTPYEGYVAVAEQLNRITPGSGPKRSVLFNSGAEAVENAVKIARSYTGKPAVVAFDHAYHGRTNLTMALTAKSMPYKSGFGPFAPEIYRAPLSYPYRDGLLDKQLATNGELAAARAIGVIDKQVGANNLAALVIEPIQGEGGFIVPAEGFLPALLDWCRKNHVVFIADEVQTGFARTGAMFACEHEGPDGLEPDLICTAKGIADGLPLSAVTGRAEIMNAPHVGGLGGTFGGNPVACAAALATIATIESDGLIERARQIERLVTDRLTTLQAVDDRIGDVRGRGAMIAVELVKSGTTEPDAGLTERLATAAHAAGVIILTCGMFGNIIRLLPPLTIGDELLSEGLDIVCAILADL.

The residue at position 294 (lysine 294) is an N6-(pyridoxal phosphate)lysine.

It belongs to the class-III pyridoxal-phosphate-dependent aminotransferase family. It depends on pyridoxal 5'-phosphate as a cofactor.

The enzyme catalyses 4-aminobutanoate + 2-oxoglutarate = succinate semialdehyde + L-glutamate. It carries out the reaction (S)-3-amino-2-methylpropanoate + 2-oxoglutarate = 2-methyl-3-oxopropanoate + L-glutamate. It functions in the pathway amino-acid degradation; 4-aminobutanoate degradation. This is 4-aminobutyrate aminotransferase (gabT) from Mycobacterium bovis (strain ATCC BAA-935 / AF2122/97).